A 1183-amino-acid chain; its full sequence is MDAVNAFNQELFSLMDMKPPISRAKMILITKAAIKAIKLYKHVVQIVEKFIKKCKPEYKVPGLYVIDSIVRQSRHQFGTDKDVFGPRFSKNITATFQYLYLCPSEDKSKIVRVLNLWQKNGVFKIEIIQPLLDMAAGTSNAAPVAENVTNNEGSPPPPVKISSELAQAPTNSMPTVAQLPSSDAFAAVAQLFQTTQGQQLQQILQTFQQPPQPQSPALDSAVMAQVQAITAQLKTAPTQPPEQKTAFDKKLLDRFDYDDEPEAVEDSKKEDAAAISTAALATAAPPAPTAATPAVATAVPVPSATSPPPPQTPFGYPGDGVQQPAYTQHQSMDQFQPRMMPIQQDTMHHQVPLPPNGQMPGFGLLSAPPPFPPMPQPGMPQPGMAQPGLAQPGMAQPTMPQPGMPQPGMPQPGMAQPGLAQPGMAQPGMPQPAMPQPAMPQPGMAQPGVSPAPPVQPTFQSTFQPQNEPHSQKPHQQEMEVEQPCVTEVKRHVPESRKSRSRSPKRRRSRSGSRSRRSRHRRSRSRSRDRRRHSPRSRSQERRDREKERERRQKGLPQIKSETASVCSTTLWVGQLDKRTTQQDVASLLEEFGPIESINMIPPRGCAYIVMVHRQDAYRALQKLSRGNYKVNQKSIKIAWALNKGIKADYKQYWDVELGVTYIPWDKVKAEELESFCEGGMLDSDTLNPDWKGIPKKPDNEVAQNGGAETSHTEPVSPIPKPVPVPVPPIPVPAPITVPPPQVPPHQPGPPVVGALQPPAFTPPLGMPPPGFGPGVPPPPPPPPFLRPGFNPMHLPPGFLPPGPPPPITPPVSIPPPHTPPISIPNLVSGARGNAESGDSAKMYGSAGPPAAPTSLPTPPVTQPVSLLGTQGVAPGPVIGLQAPSTGLLGARPGLIPLQRPPGMPPPHLQRFPMMPPRPMPPHMMHRGPPPGPGGFAMPPPHGMKGPFPPHGPFVRPGGMPGLGGPGPGPGASEDRDGRQQQPQQQPPPQQQQQQQQPQQQPPQQSPSQQPAPAQQQPPQFRNDSRQQFNSGRDQERFGRRSFGSRVENDRERYGSRNDDRDNSNRERREWGRRSPDRDRHRDLEERSRRSSGHRDRDRDSRDRESRREKEENRKEKHEVADRAGGNKAVEPPLSQVGTIDTVSELNKGEAMATVVKPEESPAEVTSPVGPEKDPGSAAEPPR.

A CID domain is found at 1–139; the sequence is MDAVNAFNQE…PLLDMAAGTS (139 aa). K49 carries the post-translational modification N6-acetyllysine. The residue at position 154 (S154) is a Phosphoserine. 2 disordered regions span residues 299–324 and 348–561; these read VPVP…VQQP and HHQV…QIKS. Over residues 367–380 the composition is skewed to pro residues; that stretch reads APPPFPPMPQPGMP. Residues 381-398 show a composition bias toward low complexity; that stretch reads QPGMAQPGLAQPGMAQPT. The segment covering 399-410 has biased composition (pro residues); that stretch reads MPQPGMPQPGMP. Over residues 411 to 428 the composition is skewed to low complexity; sequence QPGMAQPGLAQPGMAQPG. Residues 429-440 are compositionally biased toward pro residues; that stretch reads MPQPAMPQPAMP. Positions 457 to 469 are enriched in polar residues; that stretch reads PTFQSTFQPQNEP. Residues 488–498 show a composition bias toward basic and acidic residues; it reads EVKRHVPESRK. Positions 499-536 are enriched in basic residues; the sequence is SRSRSPKRRRSRSGSRSRRSRHRRSRSRSRDRRRHSPR. Over residues 538 to 553 the composition is skewed to basic and acidic residues; sequence RSQERRDREKERERRQ. An RRM domain is found at 569–643; the sequence is TTLWVGQLDK…KSIKIAWALN (75 aa). Disordered stretches follow at residues 691-722, 800-858, and 920-1183; these read WKGI…IPKP, LPPG…SLPT, and MPPH…EPPR. Phosphoserine is present on S717. Pro residues-rich tracts occupy residues 800-823 and 920-952; these read LPPG…PPIS and MPPH…PPHG. A compositionally biased stretch (low complexity) spans 1006-1020; sequence SPSQQPAPAQQQPPQ. At S1042 the chain carries Phosphoserine. A compositionally biased stretch (basic and acidic residues) spans 1047–1122; it reads VENDRERYGS…NRKEKHEVAD (76 aa). Residues 1136 to 1145 are compositionally biased toward polar residues; sequence QVGTIDTVSE.

Interacts with POLR2A; via C-terminal heptapeptide repeat domain (CTD) phosphorylated at 'Ser-2' and 'Ser-5'.

It localises to the nucleus. Functionally, anti-terminator protein required to prevent early mRNA termination during transcription. Together with SCAF8, acts by suppressing the use of early, alternative poly(A) sites, thereby preventing the accumulation of non-functional truncated proteins. Mechanistically, associates with the phosphorylated C-terminal heptapeptide repeat domain (CTD) of the largest RNA polymerase II subunit (POLR2A), and subsequently binds nascent RNA upstream of early polyadenylation sites to prevent premature mRNA transcript cleavage and polyadenylation. Independently of SCAF8, also acts as a suppressor of transcriptional readthrough. In Mus musculus (Mouse), this protein is SR-related and CTD-associated factor 4.